Here is a 233-residue protein sequence, read N- to C-terminus: Snake venom serine protease BthaTL (233 aa).

In terms of domain architecture, Peptidase S1 spans Val1 to Ala224. 6 disulfides stabilise this stretch: Cys7/Cys138, Cys25/Cys41, Cys73/Cys231, Cys117/Cys185, Cys149/Cys164, and Cys175/Cys200. Catalysis depends on charge relay system residues His40 and Asp85. The active-site Charge relay system is the Ser179.

This sequence belongs to the peptidase S1 family. Snake venom subfamily. Monomer. In terms of tissue distribution, expressed by the venom gland.

It is found in the secreted. Functionally, snake venom serine protease that may act in the hemostasis system of the prey. The chain is Snake venom serine protease BthaTL from Bothrops alternatus (Urutu).